A 180-amino-acid chain; its full sequence is Large ribosomal subunit protein uL5 (180 aa).

It belongs to the universal ribosomal protein uL5 family. In terms of assembly, part of the 50S ribosomal subunit; part of the 5S rRNA/L5/L18/L25 subcomplex. Contacts the 5S rRNA and the P site tRNA. Forms a bridge to the 30S subunit in the 70S ribosome.

Its function is as follows. This is one of the proteins that bind and probably mediate the attachment of the 5S RNA into the large ribosomal subunit, where it forms part of the central protuberance. In the 70S ribosome it contacts protein S13 of the 30S subunit (bridge B1b), connecting the 2 subunits; this bridge is implicated in subunit movement. Contacts the P site tRNA; the 5S rRNA and some of its associated proteins might help stabilize positioning of ribosome-bound tRNAs. The chain is Large ribosomal subunit protein uL5 from Solibacter usitatus (strain Ellin6076).